We begin with the raw amino-acid sequence, 170 residues long: Cathelicidin antimicrobial peptide (170 aa).

The first 30 residues, 1-30, serve as a signal peptide directing secretion; that stretch reads MNTQWDSPSLGRWSLVLLLLGLVMPLAIVA. The propeptide at 31–131 is cathelin-like domain (CLD); it reads QVLSYQEAVL…DISCDKDKRK (101 aa). Cystine bridges form between Cys86-Cys97 and Cys108-Cys125. The tract at residues 150–162 is active core; it reads LKNIGQRIKDFFG.

It belongs to the cathelicidin family. In terms of assembly, monomer, homodimer or homotrimer (in vitro). Oligomerizes as tetra- or hexamer in solution (in vitro). Proteolytically cleaved by proteinase PRTN3 into antibacterial peptide LL-37. Proteolytically cleaved by cathepsin CTSG and neutrophil elastase ELANE. Post-translationally, resistant to proteolytic degradation in solution, and when bound to both zwitterionic (mimicking mammalian membranes) and negatively charged membranes (mimicking bacterial membranes). In terms of processing, after secretion onto the skin surface, the CAMP gene product is processed by a serine protease-dependent mechanism into multiple novel antimicrobial peptides distinct from and shorter than cathelicidin LL-37. These peptides show enhanced antimicrobial action, acquiring the ability to kill skin pathogens such as S.aureus, E.coli and C.albicans. These peptides have lost the ability to stimulate CXCL8/IL8 release from keratinocytes. The peptides act synergistically, killing bacteria at lower concentrations when present together, and maintain activity at increased salt condition.

It is found in the secreted. The protein localises to the vesicle. Its function is as follows. Antimicrobial protein that is an integral component of the innate immune system. Binds to bacterial lipopolysaccharides (LPS). Acts via neutrophil N-formyl peptide receptors to enhance the release of CXCL2. Postsecretory processing generates multiple cathelicidin antimicrobial peptides with various lengths which act as a topical antimicrobial defense in sweat on skin. The unprocessed precursor form, cathelicidin antimicrobial peptide, inhibits the growth of Gram-negative E.coli and E.aerogenes with efficiencies comparable to that of the mature peptide LL-37 (in vitro). Antimicrobial peptide that is an integral component of the innate immune system. Binds to bacterial lipopolysaccharides (LPS). Causes membrane permeabilization by forming transmembrane pores (in vitro). Causes lysis of E.coli. Exhibits antimicrobial activity against Gram-negative bacteria such as P.aeruginosa, S.typhimurium, E.aerogenes, E.coli and P.syringae, Gram-positive bacteria such as L.monocytogenes, S.epidermidis, S.pyogenes and S.aureus, as well as vancomycin-resistant enterococci (in vitro). Exhibits antimicrobial activity against methicillin-resistant S.aureus, P.mirabilis, and C.albicans in low-salt media, but not in media containing 100 mM NaCl (in vitro). Forms chiral supramolecular assemblies with quinolone signal (PQS) molecules of P.aeruginosa, which may lead to interference of bacterial quorum signaling and perturbance of bacterial biofilm formation. May form supramolecular fiber-like assemblies on bacterial membranes. Induces cytokine and chemokine producation as well as TNF/TNFA and CSF2/GMCSF production in normal human keratinocytes. Exhibits hemolytic activity against red blood cells. In terms of biological role, exhibits antimicrobial activity against E.coli and B.megaterium (in vitro). In Ateles fusciceps (Brown-headed spider monkey), this protein is Cathelicidin antimicrobial peptide.